The following is an 824-amino-acid chain: Disintegrin and metalloproteinase domain-containing protein 17 (824 aa).

The first 17 residues, 1 to 17, serve as a signal peptide directing secretion; the sequence is MRQSLLFLTSVVPFVLA. A propeptide spanning residues 18 to 214 is cleaved from the precursor; it reads PRPPDDPGFG…PEELVHRVKR (197 aa). Residues Asn103, Asn157, and Asn174 are each glycosylated (N-linked (GlcNAc...) asparagine). Positions 182 to 189 match the Cysteine switch motif; it reads KVCGYLKV. Cys184 is a binding site for Zn(2+). Over 215–671 the chain is Extracellular; it reads RADPDPMKNT…NTFGKFLADN (457 aa). The region spanning 223 to 474 is the Peptidase M12B domain; the sequence is NTCKLLVVAD…KAQECFQERS (252 aa). Intrachain disulfides connect Cys225–Cys333, Cys365–Cys469, and Cys423–Cys453. A glycan (N-linked (GlcNAc...) asparagine) is linked at Asn264. Position 405 (His405) interacts with Zn(2+). Glu406 is a catalytic residue. Zn(2+) is bound by residues His409 and His415. N-linked (GlcNAc...) asparagine glycans are attached at residues Asn452, Asn498, Asn539, and Asn551. The 89-residue stretch at 475 to 563 folds into the Disintegrin domain; the sequence is NKVCGNSRVD…ECPPPGNAED (89 aa). 4 disulfides stabilise this stretch: Cys534–Cys555, Cys573–Cys582, Cys578–Cys591, and Cys593–Cys600. An N-linked (GlcNAc...) asparagine glycan is attached at Asn594. A crambin-like region spans residues 603-671; it reads CCRDLSGRCV…NTFGKFLADN (69 aa). Residues 672 to 692 form a helical membrane-spanning segment; sequence IVGSVLVFSLIFWIPFSILVH. Topologically, residues 693–824 are cytoplasmic; sequence CVDKKLDKQY…NRVDSKETEC (132 aa). Short sequence motifs (SH3-binding) lie at residues 731-738 and 741-748; these read PAPQTPGR and PAPVIPSA. A disordered region spans residues 732-824; sequence APQTPGRLQP…NRVDSKETEC (93 aa). A Phosphothreonine; by MAPK14 modification is found at Thr735. Residues 741–752 show a composition bias toward low complexity; sequence PAPVIPSAPAAP. Position 761 is a phosphothreonine (Thr761). Residue Ser767 is modified to Phosphoserine. 3 stretches are compositionally biased toward basic and acidic residues: residues 768-781, 791-807, and 815-824; these read TDSH…EKDP, SFED…EKAA, and NRVDSKETEC. A phosphoserine mark is found at Ser791 and Ser819.

In terms of assembly, interacts with MAD2L1, MAPK14 and MUC1. Interacts with iRhom1/RHBDF1 and iRhom2/RHBDF2. Interacts with FRMD8 via its interaction with iRhom1/RHBDF1 and iRhom2/RHBDF2. Interacts with TSPAN8. Zn(2+) is required as a cofactor. The precursor is cleaved by a furin endopeptidase. In terms of processing, phosphorylated. Stimulation by growth factor or phorbol 12-myristate 13-acetate induces phosphorylation of Ser-819 but decreases phosphorylation of Ser-791. Phosphorylation at Thr-735 by MAPK14 is required for ADAM17-mediated ectodomain shedding. In terms of tissue distribution, ubiquitously expressed. Expressed at highest levels in adult heart, placenta, skeletal muscle, pancreas, spleen, thymus, prostate, testes, ovary and small intestine, and in fetal brain, lung, liver and kidney. Expressed in natural killer cells (at protein level).

Its subcellular location is the cell membrane. It catalyses the reaction Narrow endopeptidase specificity. Cleaves Pro-Leu-Ala-Gln-Ala-|-Val-Arg-Ser-Ser-Ser in the membrane-bound, 26-kDa form of tumor necrosis factor alpha (TNFalpha). Similarly cleaves other membrane-anchored, cell-surface proteins to 'shed' the extracellular domains.. Functionally, transmembrane metalloprotease which mediates the ectodomain shedding of a myriad of transmembrane proteins including adhesion proteins, growth factor precursors and cytokines important for inflammation and immunity. Cleaves the membrane-bound precursor of TNF-alpha to its mature soluble form. Responsible for the proteolytical release of soluble JAM3 from endothelial cells surface. Responsible for the proteolytic release of several other cell-surface proteins, including p75 TNF-receptor, interleukin 1 receptor type II, p55 TNF-receptor, transforming growth factor-alpha, L-selectin, growth hormone receptor, MUC1 and the amyloid precursor protein. Acts as an activator of Notch pathway by mediating cleavage of Notch, generating the membrane-associated intermediate fragment called Notch extracellular truncation (NEXT). Plays a role in the proteolytic processing of ACE2. Plays a role in hemostasis through shedding of GP1BA, the platelet glycoprotein Ib alpha chain. Mediates the proteolytic cleavage of LAG3, leading to release the secreted form of LAG3. Mediates the proteolytic cleavage of IL6R, leading to the release of secreted form of IL6R. Mediates the proteolytic cleavage and shedding of FCGR3A upon NK cell stimulation, a mechanism that allows for increased NK cell motility and detachment from opsonized target cells. Cleaves TREM2, resulting in shedding of the TREM2 ectodomain. The chain is Disintegrin and metalloproteinase domain-containing protein 17 from Homo sapiens (Human).